A 150-amino-acid chain; its full sequence is UPF0756 membrane protein A1S_2121 (150 aa).

4 consecutive transmembrane segments (helical) span residues 22 to 42 (SQNA…ITPL), 45 to 65 (FFPY…TIGV), 83 to 103 (FISF…WLGG), and 115 to 135 (VVAG…GVPV).

The protein belongs to the UPF0756 family.

The protein resides in the cell membrane. The chain is UPF0756 membrane protein A1S_2121 from Acinetobacter baumannii (strain ATCC 17978 / DSM 105126 / CIP 53.77 / LMG 1025 / NCDC KC755 / 5377).